Here is a 378-residue protein sequence, read N- to C-terminus: Erythronate-4-phosphate dehydrogenase (378 aa).

The substrate site is built by S45 and T66. NAD(+) contacts are provided by D142 and T169. The active site involves R202. D226 serves as a coordination point for NAD(+). Residue E231 is part of the active site. H248 (proton donor) is an active-site residue. Residue G251 coordinates NAD(+). Y252 is a substrate binding site.

This sequence belongs to the D-isomer specific 2-hydroxyacid dehydrogenase family. PdxB subfamily. In terms of assembly, homodimer.

The protein localises to the cytoplasm. The catalysed reaction is 4-phospho-D-erythronate + NAD(+) = (R)-3-hydroxy-2-oxo-4-phosphooxybutanoate + NADH + H(+). The protein operates within cofactor biosynthesis; pyridoxine 5'-phosphate biosynthesis; pyridoxine 5'-phosphate from D-erythrose 4-phosphate: step 2/5. Catalyzes the oxidation of erythronate-4-phosphate to 3-hydroxy-2-oxo-4-phosphonooxybutanoate. The chain is Erythronate-4-phosphate dehydrogenase from Cellvibrio japonicus (strain Ueda107) (Pseudomonas fluorescens subsp. cellulosa).